A 293-amino-acid polypeptide reads, in one-letter code: Tumor necrosis factor receptor type 1-associated DEATH domain protein (293 aa).

The Nuclear export signal signature appears at 156 to 171; sequence LRDDEVTQLEQQLQNS. The region spanning 200–290 is the Death domain; the sequence is TPADQQRFAA…SMAEIMLGIQ (91 aa). The short motif at 216-229 is the Nuclear localization signal element; it reads KRVGRALQKNCRAL.

In terms of assembly, heterodimer with tnfrsf1a.

It localises to the nucleus. The protein resides in the cytoplasm. Its subcellular location is the cytoskeleton. In terms of biological role, adapter molecule for tnfrsf1a that specifically associates with the cytoplasmic domain of activated tnfrsf1a mediating its interaction with fadd. This chain is Tumor necrosis factor receptor type 1-associated DEATH domain protein, found in Danio rerio (Zebrafish).